Here is a 570-residue protein sequence, read N- to C-terminus: Dihydroxy-acid dehydratase (570 aa).

A disordered region spans residues methionine 1–glycine 25. Cysteine 60 provides a ligand contact to [2Fe-2S] cluster. Position 92 (aspartate 92) interacts with Mg(2+). Position 133 (cysteine 133) interacts with [2Fe-2S] cluster. Mg(2+) contacts are provided by aspartate 134 and lysine 135. Lysine 135 is subject to N6-carboxylysine. Residue cysteine 202 participates in [2Fe-2S] cluster binding. Glutamate 453 lines the Mg(2+) pocket. Residue serine 479 is the Proton acceptor of the active site.

This sequence belongs to the IlvD/Edd family. In terms of assembly, homodimer. [2Fe-2S] cluster is required as a cofactor. The cofactor is Mg(2+).

The enzyme catalyses (2R)-2,3-dihydroxy-3-methylbutanoate = 3-methyl-2-oxobutanoate + H2O. It catalyses the reaction (2R,3R)-2,3-dihydroxy-3-methylpentanoate = (S)-3-methyl-2-oxopentanoate + H2O. It functions in the pathway amino-acid biosynthesis; L-isoleucine biosynthesis; L-isoleucine from 2-oxobutanoate: step 3/4. The protein operates within amino-acid biosynthesis; L-valine biosynthesis; L-valine from pyruvate: step 3/4. In terms of biological role, functions in the biosynthesis of branched-chain amino acids. Catalyzes the dehydration of (2R,3R)-2,3-dihydroxy-3-methylpentanoate (2,3-dihydroxy-3-methylvalerate) into 2-oxo-3-methylpentanoate (2-oxo-3-methylvalerate) and of (2R)-2,3-dihydroxy-3-methylbutanoate (2,3-dihydroxyisovalerate) into 2-oxo-3-methylbutanoate (2-oxoisovalerate), the penultimate precursor to L-isoleucine and L-valine, respectively. The polypeptide is Dihydroxy-acid dehydratase (Chromohalobacter salexigens (strain ATCC BAA-138 / DSM 3043 / CIP 106854 / NCIMB 13768 / 1H11)).